The sequence spans 347 residues: NADH-ubiquinone oxidoreductase chain 2 (347 aa).

10 helical membrane-spanning segments follow: residues Met1–Ile21, His25–Met45, Tyr59–Met79, Thr96–Pro116, Ile122–Leu142, Ile149–Gly169, Leu200–Ile220, Ile239–Gly259, Asp274–Met294, and Leu325–Ile345.

The protein belongs to the complex I subunit 2 family. In terms of assembly, core subunit of respiratory chain NADH dehydrogenase (Complex I) which is composed of 45 different subunits. Interacts with TMEM242.

Its subcellular location is the mitochondrion inner membrane. The enzyme catalyses a ubiquinone + NADH + 5 H(+)(in) = a ubiquinol + NAD(+) + 4 H(+)(out). Functionally, core subunit of the mitochondrial membrane respiratory chain NADH dehydrogenase (Complex I) which catalyzes electron transfer from NADH through the respiratory chain, using ubiquinone as an electron acceptor. Essential for the catalytic activity and assembly of complex I. This Balaenoptera musculus (Blue whale) protein is NADH-ubiquinone oxidoreductase chain 2.